The primary structure comprises 381 residues: L-lactate dehydrogenase (381 aa).

The region spanning 1–380 is the FMN hydroxy acid dehydrogenase domain; that stretch reads MIISASTDYR…SADSLVRELG (380 aa). Tyrosine 24 is a binding site for substrate. FMN is bound by residues serine 106 and glutamine 127. Residue tyrosine 129 participates in substrate binding. Threonine 155 contacts FMN. Residue arginine 164 coordinates substrate. Residue lysine 251 coordinates FMN. Histidine 275 (proton acceptor) is an active-site residue. Arginine 278 provides a ligand contact to substrate. Residue 306–330 participates in FMN binding; it reads DSGIRTGLDVVRMIALGADSVLLGR.

Belongs to the FMN-dependent alpha-hydroxy acid dehydrogenase family. As to quaternary structure, homotetramer. Requires FMN as cofactor.

It localises to the cell inner membrane. The catalysed reaction is (S)-lactate + A = pyruvate + AH2. Its function is as follows. Catalyzes the conversion of L-lactate to pyruvate. Is coupled to the respiratory chain. The protein is L-lactate dehydrogenase of Pseudomonas aeruginosa (strain UCBPP-PA14).